Reading from the N-terminus, the 479-residue chain is Glutamate--tRNA ligase (479 aa).

A 'HIGH' region motif is present at residues 9 to 19; the sequence is PSPTGNLHIGT. The 'KMSKS' region motif lies at 243–247; the sequence is KLSKR. An ATP-binding site is contributed by Lys246.

The protein belongs to the class-I aminoacyl-tRNA synthetase family. Glutamate--tRNA ligase type 1 subfamily. In terms of assembly, monomer.

It localises to the cytoplasm. The enzyme catalyses tRNA(Glu) + L-glutamate + ATP = L-glutamyl-tRNA(Glu) + AMP + diphosphate. Its function is as follows. Catalyzes the attachment of glutamate to tRNA(Glu) in a two-step reaction: glutamate is first activated by ATP to form Glu-AMP and then transferred to the acceptor end of tRNA(Glu). In Synechococcus sp. (strain JA-3-3Ab) (Cyanobacteria bacterium Yellowstone A-Prime), this protein is Glutamate--tRNA ligase.